The chain runs to 153 residues: Endoribonuclease YbeY (153 aa).

Positions 114, 118, and 124 each coordinate Zn(2+).

Belongs to the endoribonuclease YbeY family. It depends on Zn(2+) as a cofactor.

Its subcellular location is the cytoplasm. Functionally, single strand-specific metallo-endoribonuclease involved in late-stage 70S ribosome quality control and in maturation of the 3' terminus of the 16S rRNA. This Shewanella putrefaciens (strain CN-32 / ATCC BAA-453) protein is Endoribonuclease YbeY.